A 148-amino-acid polypeptide reads, in one-letter code: Ubiquitin-conjugating enzyme E2-16 kDa (148 aa).

A UBC core domain is found at 2 to 148 (SSSKRIAKEL…AKEWTKKYAV (147 aa)). Phosphoserine is present on Ser-12. The Glycyl thioester intermediate role is filled by Cys-86. Lys-91 participates in a covalent cross-link: Glycyl lysine isopeptide (Lys-Gly) (interchain with G-Cter in ubiquitin).

Belongs to the ubiquitin-conjugating enzyme family. As to quaternary structure, component of the RSP5-UBA1-UBC5 ubiquitin ligase complex composed of E3 RSP5, E1 UBA1 and E2 UBC5. Post-translationally, the N-terminus is blocked.

The enzyme catalyses S-ubiquitinyl-[E1 ubiquitin-activating enzyme]-L-cysteine + [E2 ubiquitin-conjugating enzyme]-L-cysteine = [E1 ubiquitin-activating enzyme]-L-cysteine + S-ubiquitinyl-[E2 ubiquitin-conjugating enzyme]-L-cysteine.. It participates in protein modification; protein ubiquitination. Its function is as follows. Catalyzes the covalent attachment of ubiquitin to other proteins. Mediates the selective degradation of short-lived and abnormal proteins. The RSP5-UBA1-UBC5 ubiquitin ligase complex ubiquitinates RPO21 forming 'Lys-63'-linked polyubiquitin chains. This Saccharomyces cerevisiae (strain ATCC 204508 / S288c) (Baker's yeast) protein is Ubiquitin-conjugating enzyme E2-16 kDa (UBC5).